Consider the following 210-residue polypeptide: Thiamine-phosphate synthase (210 aa).

Residues 39-43 and Asn71 each bind 4-amino-2-methyl-5-(diphosphooxymethyl)pyrimidine; that span reads QLREK. Residues Asp72 and Asp91 each coordinate Mg(2+). Ser110 is a 4-amino-2-methyl-5-(diphosphooxymethyl)pyrimidine binding site. Residue 134 to 136 coordinates 2-[(2R,5Z)-2-carboxy-4-methylthiazol-5(2H)-ylidene]ethyl phosphate; the sequence is TPT. Residue Lys137 coordinates 4-amino-2-methyl-5-(diphosphooxymethyl)pyrimidine. Gly163 serves as a coordination point for 2-[(2R,5Z)-2-carboxy-4-methylthiazol-5(2H)-ylidene]ethyl phosphate.

The protein belongs to the thiamine-phosphate synthase family. Mg(2+) serves as cofactor.

It catalyses the reaction 2-[(2R,5Z)-2-carboxy-4-methylthiazol-5(2H)-ylidene]ethyl phosphate + 4-amino-2-methyl-5-(diphosphooxymethyl)pyrimidine + 2 H(+) = thiamine phosphate + CO2 + diphosphate. The catalysed reaction is 2-(2-carboxy-4-methylthiazol-5-yl)ethyl phosphate + 4-amino-2-methyl-5-(diphosphooxymethyl)pyrimidine + 2 H(+) = thiamine phosphate + CO2 + diphosphate. It carries out the reaction 4-methyl-5-(2-phosphooxyethyl)-thiazole + 4-amino-2-methyl-5-(diphosphooxymethyl)pyrimidine + H(+) = thiamine phosphate + diphosphate. It participates in cofactor biosynthesis; thiamine diphosphate biosynthesis; thiamine phosphate from 4-amino-2-methyl-5-diphosphomethylpyrimidine and 4-methyl-5-(2-phosphoethyl)-thiazole: step 1/1. Its function is as follows. Condenses 4-methyl-5-(beta-hydroxyethyl)thiazole monophosphate (THZ-P) and 2-methyl-4-amino-5-hydroxymethyl pyrimidine pyrophosphate (HMP-PP) to form thiamine monophosphate (TMP). The sequence is that of Thiamine-phosphate synthase from Campylobacter jejuni (strain RM1221).